The primary structure comprises 33 residues: DELTA-pseudomyrmecitoxin-Pp1a subunit B (33 aa).

In terms of assembly, heterodimer composed of subunit A and subunit B (DELTA-PSDTX-Pp1a); disulfide-linked. As to expression, expressed by the venom gland.

It localises to the secreted. Functionally, this heterodimer has insecticidal and cytotoxic properties. Induces immediate paralysis when injected into blowflies (Lucilia cuprina), and then death within 24 hours. Also inhibits the growth of Aedes albopictus mosquito C6/36 cells. In Pseudomyrmex penetrator (Ant), this protein is DELTA-pseudomyrmecitoxin-Pp1a subunit B.